A 634-amino-acid polypeptide reads, in one-letter code: Chaperone protein HtpG (634 aa).

Residues 1 to 339 (MAQETMSFQA…SADLPLNVSR (339 aa)) are a; substrate-binding. The b stretch occupies residues 340 to 559 (EILQESRDVK…DGEMSGYLQR (220 aa)). The tract at residues 560 to 634 (MLKAAGQQAP…ALLLARANEA (75 aa)) is c.

The protein belongs to the heat shock protein 90 family. Homodimer.

The protein resides in the cytoplasm. Its function is as follows. Molecular chaperone. Has ATPase activity. The sequence is that of Chaperone protein HtpG from Paraburkholderia xenovorans (strain LB400).